The primary structure comprises 414 residues: Sec-independent protein translocase protein TatC (414 aa).

A disordered region spans residues 1 to 21 (MTQSTSVSKGGRVSRKAKKNP). Transmembrane regions (helical) follow at residues 45–65 (IAVTTIIGFIWYEHGIPAWAI), 119–139 (GGLAGLVMACPIWLIEIWRFI), 157–177 (IAGFLFVLGVVAAYLVLPMGL), 200–220 (FVIALILVFGLSFEVPLFTAM), 238–258 (IMIVVIFIFAAIATPGQDPIS), and 259–279 (MLVLALTLVVLMELALQFTRI). Positions 315-414 (IYDGDHKGIA…IQSSSFDDVL (100 aa)) are disordered. Positions 323–336 (IAGGGDAHPAGGSG) are enriched in gly residues. The span at 345–357 (TAPTRAPSASESP) shows a compositional bias: low complexity. Polar residues predominate over residues 403 to 414 (DTIQSSSFDDVL).

Belongs to the TatC family. In terms of assembly, the Tat system comprises two distinct complexes: a TatABC complex, containing multiple copies of TatA, TatB and TatC subunits, and a separate TatA complex, containing only TatA subunits. Substrates initially bind to the TatABC complex, which probably triggers association of the separate TatA complex to form the active translocon.

The protein resides in the cell membrane. Its function is as follows. Part of the twin-arginine translocation (Tat) system that transports large folded proteins containing a characteristic twin-arginine motif in their signal peptide across membranes. Together with TatB, TatC is part of a receptor directly interacting with Tat signal peptides. In Corynebacterium kroppenstedtii (strain DSM 44385 / JCM 11950 / CIP 105744 / CCUG 35717), this protein is Sec-independent protein translocase protein TatC.